The following is a 238-amino-acid chain: Dof zinc finger protein MNB1A (238 aa).

The segment covering 1-13 (MQEASSAAAAGAE) has biased composition (low complexity). The tract at residues 1–48 (MQEASSAAAAGAEPGRRAAQHQFAGVDLRRPKGYAAPAPAPAVGEGDP) is disordered. The Dof-type zinc finger occupies 47-101 (DPCPRCASRDTKFCYYNNYNTSQPRHFCKGCRRYWTKGGTLRNVPVGGGTRKKPS). Residues Cys49, Cys52, Cys74, and Cys77 each coordinate Zn(2+). Residues 85–155 (GTLRNVPVGG…TATTTTTTSE (71 aa)) form a disordered region. Residues 119–130 (PKKKPASKKRRV) show a composition bias toward basic residues. Over residues 138 to 155 (ATAADPGKTATTTTTTSE) the composition is skewed to low complexity.

As to expression, expressed in all tissues examined.

The protein localises to the nucleus. In terms of biological role, transcription factor that binds specifically to a 5'-AA[AG]G-3' consensus core sequence at the MNF1-binding site. In Zea mays (Maize), this protein is Dof zinc finger protein MNB1A (MNB1A).